A 180-amino-acid chain; its full sequence is 3-hydroxyanthranilate 3,4-dioxygenase (180 aa).

Arginine 46 lines the O2 pocket. The Fe cation site is built by histidine 50, glutamate 56, and histidine 94. Position 56 (glutamate 56) interacts with substrate. Positions 98 and 109 each coordinate substrate. Cysteine 124, cysteine 127, cysteine 161, and cysteine 164 together coordinate Fe cation.

This sequence belongs to the 3-HAO family. In terms of assembly, homodimer. The cofactor is Fe(2+).

It carries out the reaction 3-hydroxyanthranilate + O2 = (2Z,4Z)-2-amino-3-carboxymuconate 6-semialdehyde. Its pathway is cofactor biosynthesis; NAD(+) biosynthesis; quinolinate from L-kynurenine: step 3/3. Its function is as follows. Catalyzes the oxidative ring opening of 3-hydroxyanthranilate to 2-amino-3-carboxymuconate semialdehyde, which spontaneously cyclizes to quinolinate. The polypeptide is 3-hydroxyanthranilate 3,4-dioxygenase (Ruegeria pomeroyi (strain ATCC 700808 / DSM 15171 / DSS-3) (Silicibacter pomeroyi)).